A 175-amino-acid chain; its full sequence is Large ribosomal subunit protein uL10 (175 aa).

This sequence belongs to the universal ribosomal protein uL10 family. As to quaternary structure, part of the ribosomal stalk of the 50S ribosomal subunit. The N-terminus interacts with L11 and the large rRNA to form the base of the stalk. The C-terminus forms an elongated spine to which L12 dimers bind in a sequential fashion forming a multimeric L10(L12)X complex.

Forms part of the ribosomal stalk, playing a central role in the interaction of the ribosome with GTP-bound translation factors. This is Large ribosomal subunit protein uL10 from Prochlorococcus marinus (strain AS9601).